The following is an 87-amino-acid chain: HssA/B-like protein 8 (87 aa).

The segment covering 1 to 22 has biased composition (polar residues); it reads MSILSALTSISNPMKSTKSSVA. The disordered stretch occupies residues 1–24; the sequence is MSILSALTSISNPMKSTKSSVANG.

It belongs to the hssA/B family.

The sequence is that of HssA/B-like protein 8 (hssl8) from Dictyostelium discoideum (Social amoeba).